A 277-amino-acid chain; its full sequence is Elongation factor Ts (277 aa).

Residues 81 to 84 (TDFV) are involved in Mg(2+) ion dislocation from EF-Tu.

It belongs to the EF-Ts family.

The protein resides in the cytoplasm. Associates with the EF-Tu.GDP complex and induces the exchange of GDP to GTP. It remains bound to the aminoacyl-tRNA.EF-Tu.GTP complex up to the GTP hydrolysis stage on the ribosome. The protein is Elongation factor Ts of Amoebophilus asiaticus (strain 5a2).